The primary structure comprises 562 residues: Zinc finger protein 579 (562 aa).

Positions 1 to 11 (MDPQPPPPAQG) are enriched in pro residues. Positions 1-45 (MDPQPPPPAQGSPPHRDRGRGRGRGRGRGRGRGRGRGGAGAPRAP) are disordered. Residues 17 to 35 (DRGRGRGRGRGRGRGRGRG) show a composition bias toward basic residues. 3 consecutive C2H2-type zinc fingers follow at residues 46 to 68 (LPCP…RLSH), 74 to 96 (HACP…LRGH), and 102 to 125 (LRCA…AQEH). Position 94 is an omega-N-methylarginine (R94). 2 disordered regions span residues 120–154 (HLAQ…EGVE) and 166–199 (EEAT…AEAG). The segment covering 187–197 (DPRESEAKEAE) has biased composition (basic and acidic residues). Position 191 is a phosphoserine (S191). 2 consecutive C2H2-type zinc fingers follow at residues 267 to 289 (HQCS…RLVH) and 295 to 317 (FVCP…RRVH). The disordered stretch occupies residues 321-377 (SLLAPLPGAGKKDDKASGGRNSGKGPEGGEGAECGGASEGGEGGHNGGDATPARPPA). Positions 340-367 (RNSGKGPEGGEGAECGGASEGGEGGHNG) are enriched in gly residues. 3 consecutive C2H2-type zinc fingers follow at residues 382–404 (FWCP…GVTH), 410–432 (FQCV…AQVH), and 439–461 (HPCP…QRCH). S486 is subject to Phosphoserine. The tract at residues 505-530 (AHIKEEPPSPGTPPQSPPAPPVFLSA) is disordered. Positions 512 to 525 (PSPGTPPQSPPAPP) are enriched in pro residues.

The protein belongs to the krueppel C2H2-type zinc-finger protein family.

The protein resides in the nucleus. Functionally, may be involved in transcriptional regulation. The sequence is that of Zinc finger protein 579 (Znf579) from Mus musculus (Mouse).